A 768-amino-acid chain; its full sequence is MTTEDHLLRTASQHSDSSGFAEDSTDCLSLNHLQVQESLQAMGSSADSCDSETTVTSLGEDLATPTAQDQPYFNESEEESLVPLQKGLEKAAAIADRRKSGSQDFPQCNTIENPGTKQSTCSPGDRVTEITEVEEDLFPAETVELLREASAESDVDKSSECEFTQYTTHHILKSLASIEAKCSDMSSENTTGPPSSVDRVNTALQRAQMKVCTLSNQRMGRSLLKSKDLLKQRYLFAKVGYPLRRSQSLPTTLLSPVRVVSSVNVRLSPGKETRCSPPSFTYKYTPEEEQELEKRAMEHDGQSLVKSTIFISPSSVKKEEAPQSEAPRVEECHHGRTPTCSRLAPPPMSQSTCSLHSIHSEWQERPLCEHTRTLSTHSVPNISGATCSAFASPFGCPYSHRHATYPYRVCSVNPPSAIEMQLRRVLHDIRNSLQNLSQYPMMRGPDPAAAPYSTQKSSVLPLYENTFQELQVMRRSLNLFRTQMMDLELAMLRQQTMVYHHMTEEERFEVDQLQGLRNSVRMELQDLELQLEERLLGLEEQLRAVRMPSPFRSSALMGMCGSRSADNLSCPSPLNVMEPVTELMQEQSYLKSELGLGLGEMGFEIPPGESSESVFSQATSESSSVCSGPSHANRRTGVPSTASVGKPKTPLVARKKVFRASVALTPTAPSRTGSVQTPPDLESSEEVDAAEEAPEVVGPKSEVEEGHGKLPSMPAAEEMHKNVEQDELQQVIREIKESIVGEIRREIVSGLLAAVSSSKASNSKQDNH.

3 disordered regions span residues 1 to 24 (MTTE…AEDS), 39 to 78 (LQAM…ESEE), and 98 to 124 (RKSG…CSPG). Composition is skewed to polar residues over residues 39-57 (LQAM…TVTS) and 102-122 (SQDF…STCS). Phosphoserine occurs at positions 153, 177, 246, 248, 255, 268, 276, and 312. The disordered stretch occupies residues 315 to 338 (SVKKEEAPQSEAPRVEECHHGRTP). Positions 316 to 334 (VKKEEAPQSEAPRVEECHH) are enriched in basic and acidic residues. A Glycyl lysine isopeptide (Lys-Gly) (interchain with G-Cter in SUMO2) cross-link involves residue Lys-317. Ser-378 and Ser-411 each carry phosphoserine. A coiled-coil region spans residues 468–546 (QELQVMRRSL…GLEEQLRAVR (79 aa)). Residues Ser-549, Ser-564, Ser-569, Ser-572, Ser-627, and Ser-643 each carry the phosphoserine modification. Disordered regions lie at residues 605–647 (IPPG…VGKP) and 663–718 (ALTP…AAEE). The segment covering 610 to 627 (SSESVFSQATSESSSVCS) has biased composition (polar residues). A Phosphothreonine modification is found at Thr-665. Polar residues predominate over residues 667-677 (TAPSRTGSVQT). Ser-670 is subject to Phosphoserine. A Phosphothreonine modification is found at Thr-677. Residues 682-694 (ESSEEVDAAEEAP) show a composition bias toward acidic residues.

The protein resides in the cytoplasm. The polypeptide is Protein ITPRID2 (Pongo abelii (Sumatran orangutan)).